Here is a 580-residue protein sequence, read N- to C-terminus: MAPPTPHLAVRGSDGTLLLHGPPNCQESSAFQRDDRQGRYMTFSNDGTLFAWCNGSQVTVLKVPSGDLVKSFDLPKTTALEFSPLNKVLATWQQYTKTQDNPQGEANLQLWDLQTGACMKAFYQKKMTGWCPSWADDESISVRNVNNELHFFENNNFETIANKLHLQKVSEFALSPGSQPSKVAVYVPGSKGAPSFVRLYQYPNFGGPTCALANKSFFKADKVNMLWNKKATAVLVTASTEVDKTGASYYGEQTLHYVATNGESAVVQLPKNGPIYDVSWSPNSTEFCVVYGFMPAKATVFNNKCESVFDFGTGPRNAAFYSPQGHILVLAGFGNLRGQMEVWDVKKYKQVSKPQAEDTTHFSWCPDGEHIVTATCSPRLRASNGYKIWHYTGTVLYKHETPSGKELWEVLWQPFPAGVFPERAVKYQALPSELGSTEAKPAQAYRPPALRNKPQTASSKLHEEEPPQNMKPGAAGEKQPSKAALKNQKRREAKKAAKQENKPDEAPPPAADPAPVSHVTSSCGDPETDKKIKNLKKKLKAIDELKEQQAAGKVMQKNQLEKMQKEAQLLKELEDLELGL.

4 WD repeats span residues 21–62 (GPPN…TVLK), 72–121 (FDLP…CMKA), 270–311 (PKNG…VFDF), and 355–399 (QAED…LYKH). The disordered stretch occupies residues 435–530 (GSTEAKPAQA…SSCGDPETDK (96 aa)). The stretch at 481–578 (SKAALKNQKR…LLKELEDLEL (98 aa)) forms a coiled coil. The segment covering 494-505 (KKAAKQENKPDE) has biased composition (basic and acidic residues).

Belongs to the WD repeat EIF2A family.

Functionally, functions in the early steps of protein synthesis of a small number of specific mRNAs. Acts by directing the binding of methionyl-tRNAi to 40S ribosomal subunits. In contrast to the eIF-2 complex, it binds methionyl-tRNAi to 40S subunits in a codon-dependent manner, whereas the eIF-2 complex binds methionyl-tRNAi to 40S subunits in a GTP-dependent manner. This chain is Eukaryotic translation initiation factor 2A (eif2a), found in Danio rerio (Zebrafish).